We begin with the raw amino-acid sequence, 201 residues long: Dephospho-CoA kinase (201 aa).

A DPCK domain is found at 4–201 (TIGLTGGIAS…ILKQWDALEK (198 aa)). 12-17 (ASGKST) contributes to the ATP binding site.

This sequence belongs to the CoaE family.

It localises to the cytoplasm. It catalyses the reaction 3'-dephospho-CoA + ATP = ADP + CoA + H(+). Its pathway is cofactor biosynthesis; coenzyme A biosynthesis; CoA from (R)-pantothenate: step 5/5. Its function is as follows. Catalyzes the phosphorylation of the 3'-hydroxyl group of dephosphocoenzyme A to form coenzyme A. The polypeptide is Dephospho-CoA kinase (Geobacillus kaustophilus (strain HTA426)).